A 501-amino-acid polypeptide reads, in one-letter code: AKT kinase-transforming protein (501 aa).

A PH domain is found at 26–129; that stretch reads AIVKEGWLHK…WATAIQTVAD (104 aa). The interval 135-158 is disordered; it reads EEETMDFRSGSPSDNSGAEEMEVS. The Protein kinase domain maps to 171–429; the sequence is FEYLKLLGKG…AKEIMQHRFF (259 aa). Residues 177–185 and Lys-200 each bind ATP; that span reads LGKGTFGKV. Asp-295 functions as the Proton acceptor in the catalytic mechanism. A Phosphotyrosine modification is found at Tyr-347. Residues 430-501 enclose the AGC-kinase C-terminal domain; that stretch reads ANIVWQDVYE…QFSYSASGTA (72 aa). The interval 471-501 is disordered; it reads TPPDQDDSMECVDSERRPHFPQFSYSASGTA.

This sequence belongs to the protein kinase superfamily. AGC Ser/Thr protein kinase family. RAC subfamily. Interacts with mouse THEM4. Autophosphorylated on threonine and serine residues.

It catalyses the reaction L-seryl-[protein] + ATP = O-phospho-L-seryl-[protein] + ADP + H(+). The enzyme catalyses L-threonyl-[protein] + ATP = O-phospho-L-threonyl-[protein] + ADP + H(+). In Mus musculus (Mouse), this protein is AKT kinase-transforming protein (V-AKT).